The sequence spans 94 residues: Large ribosomal subunit protein uL23 (94 aa).

This sequence belongs to the universal ribosomal protein uL23 family. In terms of assembly, part of the 50S ribosomal subunit. Contacts protein L29, and trigger factor when it is bound to the ribosome.

Its function is as follows. One of the early assembly proteins it binds 23S rRNA. One of the proteins that surrounds the polypeptide exit tunnel on the outside of the ribosome. Forms the main docking site for trigger factor binding to the ribosome. This is Large ribosomal subunit protein uL23 from Geobacter sulfurreducens (strain ATCC 51573 / DSM 12127 / PCA).